The chain runs to 276 residues: Foldase protein PrsA (276 aa).

Positions 1–18 are cleaved as a signal peptide; that stretch reads MRKWMIVAAVAAVFGLSA. Cys-19 carries N-palmitoyl cysteine lipidation. Residue Cys-19 is the site of S-diacylglycerol cysteine attachment. Residues 133–223 enclose the PpiC domain; it reads KPKIRASHIL…YGYHIIKVTD (91 aa).

It belongs to the PrsA family.

The protein localises to the cell membrane. It catalyses the reaction [protein]-peptidylproline (omega=180) = [protein]-peptidylproline (omega=0). Its function is as follows. Plays a major role in protein secretion by helping the post-translocational extracellular folding of several secreted proteins. The polypeptide is Foldase protein PrsA (Geobacillus sp. (strain WCH70)).